The sequence spans 140 residues: Organic hydroperoxide resistance protein-like 1 (140 aa).

This sequence belongs to the OsmC/Ohr family.

The sequence is that of Organic hydroperoxide resistance protein-like 1 from Staphylococcus epidermidis (strain ATCC 35984 / DSM 28319 / BCRC 17069 / CCUG 31568 / BM 3577 / RP62A).